The chain runs to 138 residues: Large ribosomal subunit protein uL16 (138 aa).

Over residues 1 to 13 (MLQPSRRKFRKEQ) the composition is skewed to basic residues. Residues 1 to 20 (MLQPSRRKFRKEQKGRNTGV) are disordered.

Belongs to the universal ribosomal protein uL16 family. In terms of assembly, part of the 50S ribosomal subunit.

Binds 23S rRNA and is also seen to make contacts with the A and possibly P site tRNAs. This Leptothrix cholodnii (strain ATCC 51168 / LMG 8142 / SP-6) (Leptothrix discophora (strain SP-6)) protein is Large ribosomal subunit protein uL16.